The primary structure comprises 59 residues: MKAFYGVLIIFILISMLDLSQQVFINVKCRGSPECLPKCKEAIGKSAGKCMNGKCKCYP.

An N-terminal signal peptide occupies residues 1-22 (MKAFYGVLIIFILISMLDLSQQ). 3 cysteine pairs are disulfide-bonded: C29–C50, C35–C55, and C39–C57. An interaction with Ca(2+)-activated K(+) channels region spans residues 48-55 (GKCMNGKC).

In terms of tissue distribution, expressed by the venom gland.

The protein localises to the secreted. Its function is as follows. Inhibits with low potency Kv1.1/KCNA1, Kv1.2/KCNA2, Kv1.3/KCNA3 and Kv11.1/KCNH2/ERG1 voltage-gated potassium channels. The sequence is that of Potassium channel toxin alpha-KTx 4.5 from Tityus costatus (Brazilian scorpion).